Consider the following 282-residue polypeptide: 4-hydroxy-3-methylbut-2-enyl diphosphate reductase (282 aa).

C12 contributes to the [4Fe-4S] cluster binding site. (2E)-4-hydroxy-3-methylbut-2-enyl diphosphate is bound by residues H40 and H72. Dimethylallyl diphosphate is bound by residues H40 and H72. Positions 40 and 72 each coordinate isopentenyl diphosphate. Residue C94 coordinates [4Fe-4S] cluster. H122 is a (2E)-4-hydroxy-3-methylbut-2-enyl diphosphate binding site. H122 serves as a coordination point for dimethylallyl diphosphate. H122 serves as a coordination point for isopentenyl diphosphate. E124 functions as the Proton donor in the catalytic mechanism. T160 lines the (2E)-4-hydroxy-3-methylbut-2-enyl diphosphate pocket. C188 is a [4Fe-4S] cluster binding site. Residues S216, N218, and S260 each coordinate (2E)-4-hydroxy-3-methylbut-2-enyl diphosphate. Dimethylallyl diphosphate contacts are provided by S216, N218, and S260. Isopentenyl diphosphate-binding residues include S216, N218, and S260.

It belongs to the IspH family. [4Fe-4S] cluster serves as cofactor.

It catalyses the reaction isopentenyl diphosphate + 2 oxidized [2Fe-2S]-[ferredoxin] + H2O = (2E)-4-hydroxy-3-methylbut-2-enyl diphosphate + 2 reduced [2Fe-2S]-[ferredoxin] + 2 H(+). It carries out the reaction dimethylallyl diphosphate + 2 oxidized [2Fe-2S]-[ferredoxin] + H2O = (2E)-4-hydroxy-3-methylbut-2-enyl diphosphate + 2 reduced [2Fe-2S]-[ferredoxin] + 2 H(+). It functions in the pathway isoprenoid biosynthesis; dimethylallyl diphosphate biosynthesis; dimethylallyl diphosphate from (2E)-4-hydroxy-3-methylbutenyl diphosphate: step 1/1. The protein operates within isoprenoid biosynthesis; isopentenyl diphosphate biosynthesis via DXP pathway; isopentenyl diphosphate from 1-deoxy-D-xylulose 5-phosphate: step 6/6. Its function is as follows. Catalyzes the conversion of 1-hydroxy-2-methyl-2-(E)-butenyl 4-diphosphate (HMBPP) into a mixture of isopentenyl diphosphate (IPP) and dimethylallyl diphosphate (DMAPP). Acts in the terminal step of the DOXP/MEP pathway for isoprenoid precursor biosynthesis. The sequence is that of 4-hydroxy-3-methylbut-2-enyl diphosphate reductase from Geotalea uraniireducens (strain Rf4) (Geobacter uraniireducens).